We begin with the raw amino-acid sequence, 63 residues long: uncharacterized protein (63 aa).

The helical transmembrane segment at 20–40 (IVLLISFIFFFGRFIYSSVGA) threads the bilayer.

Its subcellular location is the membrane. This is an uncharacterized protein from Escherichia coli O157:H7.